The primary structure comprises 217 residues: MSSLYYANALFSKYPAASSVFAPGAFPEQTSCAFASNPQRPGYGAGPGAPFSASVQGLYSGGGAMAGQSAAGVYAAGYGLEPSSFNMHCAPFEQNLSGVCPGDPAKAAGAKEQRDSDLAAESNFRIYPWMRSSGPDRKRGRQTYTRYQTLELEKEFHYNRYLTRRRRIEIAHTLCLTERQIKIWFQNRRMKWKKENKTSGPGTTGQDKAEAEEEEEE.

The short motif at Ile126–Arg131 is the Antp-type hexapeptide element. The homeobox DNA-binding region spans Arg137–Asn196. Residues Trp192 to Glu217 are disordered.

Belongs to the Antp homeobox family. In terms of assembly, forms a DNA-binding heterodimer with transcription factor PBX1.

It is found in the nucleus. Functionally, sequence-specific transcription factor which is part of a developmental regulatory system that provides cells with specific positional identities on the anterior-posterior axis. This Mus musculus (Mouse) protein is Homeobox protein Hox-B7 (Hoxb7).